The sequence spans 282 residues: MASLQRKGLQARILTSEEEEKLKRDQTLVSDFKQQKLEQEAQKNWDLFYKRNSTNFFKDRHWTTREFEELRSCREFEDQKLTMLEAGRGVGNCLFPLLEEDPNIFAYACDFSPRAVEYVKQNPLYDTERCKVFQCDLTKDDLLDHVPPESVDVVMLIFVLSAVHPDKMHLVLQNIYKVLKPGKSVLFRDYGLYDHAMLRFKAGSKLGENFYVRQDGTRSYFFTDEFLAQLFMDTGYEEVVNEYVFRETVNKKEGLCVPRVFLQSKFLKPPKNPSPVVPGPGS.

7 residues coordinate S-adenosyl-L-methionine: Trp45, Tyr49, Gly87, Asp110, Asp136, Leu137, and Ile157.

The protein belongs to the methyltransferase superfamily. METL family. As to quaternary structure, monomer. Interacts with SARS1/SerRS; interaction is mediated via tRNA(Ser) and is required for N(3)-methylcytidine methylation.

It localises to the cytoplasm. The protein localises to the nucleus. It carries out the reaction cytidine(32) in tRNA(Ser) + S-adenosyl-L-methionine = N(3)-methylcytidine(32) in tRNA(Ser) + S-adenosyl-L-homocysteine + H(+). Its function is as follows. S-adenosyl-L-methionine-dependent methyltransferase that mediates N(3)-methylcytidine modification of residue 32 of the tRNA anticodon loop of tRNA(Ser), including tRNA(Ser)(UGA) and tRNA(Ser)(GCU). Interaction with SARS1/SerRS is required for N(3)-methylcytidine methylation. The sequence is that of tRNA N(3)-cytidine methyltransferase METTL6 (METTL6) from Pongo abelii (Sumatran orangutan).